A 223-amino-acid polypeptide reads, in one-letter code: MKAIIPPENLTELLERANMMAGVSLAQIAANRGITVPKNLKRDKGWVGQLIEMELGATAGSKPEQDFLHLGVELKTIPINVQGKPLETTYVCVAPLSQIEGLTWENSLVCHKLQRVLWVPVEGERQISVGARRIGTPILWQPDPDELRLLQQDWEEIMELIALGKVEKLTARHGEVLQLRPKAANSRALTQSIAENGSLKMTNPRGFYLKTAFTAMILNKAFG.

The protein belongs to the MutH family.

The protein localises to the cytoplasm. Sequence-specific endonuclease that cleaves unmethylated GATC sequences. It is involved in DNA mismatch repair. This Shewanella sp. (strain W3-18-1) protein is DNA mismatch repair protein MutH.